Reading from the N-terminus, the 66-residue chain is Large ribosomal subunit protein bL33c (66 aa).

This sequence belongs to the bacterial ribosomal protein bL33 family.

It localises to the plastid. The protein localises to the chloroplast. In Physcomitrium patens (Spreading-leaved earth moss), this protein is Large ribosomal subunit protein bL33c.